The following is a 277-amino-acid chain: NH(3)-dependent NAD(+) synthetase (277 aa).

Position 36–43 (36–43) interacts with ATP; that stretch reads GLSGGIDS. Mg(2+) is bound at residue Asp-42. Deamido-NAD(+) is bound at residue Arg-118. Thr-138 is a binding site for ATP. Glu-143 contributes to the Mg(2+) binding site. ATP contacts are provided by Lys-167 and Ser-189.

This sequence belongs to the NAD synthetase family. In terms of assembly, homodimer.

It carries out the reaction deamido-NAD(+) + NH4(+) + ATP = AMP + diphosphate + NAD(+) + H(+). It participates in cofactor biosynthesis; NAD(+) biosynthesis; NAD(+) from deamido-NAD(+) (ammonia route): step 1/1. Its function is as follows. Catalyzes the ATP-dependent amidation of deamido-NAD to form NAD. Uses ammonia as a nitrogen source. In Chlorobium phaeobacteroides (strain DSM 266 / SMG 266 / 2430), this protein is NH(3)-dependent NAD(+) synthetase.